The following is a 405-amino-acid chain: MPLLLYTCLLWLSTSGLWTVQAMDPNTTYVNMSNHHRGLASANVDFAFSLYKHLVALSPKKNIFISPVSISMALAMLSLGTCGHTRAQLLQGLGFNLTGRSETEIHQGFQHLHQLFAESDTSLEMTMGNALFLDGSLELLESFSADIKHYYESEVLAMNFQDWATASRQINSYVKSKTQGKIADLLSGLDSPAILVLVNYIFFKGTWTQPFDLASTREENFYVDETTVVKVPMMLQSSTISYLHDSELPCQLVRLNYVGNGTVFFILPEKGKMNTVIAALSRDTINRWSAGLTSSQVDLYIPKVTISGVYDLGDVLEEMGIADLFTNQANFSRITQDAQLKSSKVVHKAVLQLNEEGVDTAGSTGVTLNLTSKPIILRFNQPFIIMIFDHFTWSSLFLARVVNPA.

A signal peptide spans 1-22; it reads MPLLLYTCLLWLSTSGLWTVQA. N-linked (GlcNAc...) asparagine glycosylation is found at asparagine 26, asparagine 31, asparagine 96, and asparagine 260. Position 286 (asparagine 286) interacts with cortisol. N-linked (GlcNAc...) asparagine glycosylation is found at asparagine 330 and asparagine 369. Tryptophan 393 is a cortisol binding site.

Belongs to the serpin family. Expressed by the liver; secreted in plasma.

The protein localises to the secreted. In terms of biological role, major transport protein for glucocorticoids and progestins in the blood of almost all vertebrate species. The chain is Corticosteroid-binding globulin (SERPINA6) from Pongo abelii (Sumatran orangutan).